The following is a 548-amino-acid chain: ATP synthase subunit alpha (548 aa).

172 to 179 (GDRKTGKT) provides a ligand contact to ATP. The tract at residues 510–548 (QFTTSSGESAAPSEPEAEALAADEVGQETVKVNRPAPKK) is disordered. A compositionally biased stretch (low complexity) spans 514 to 531 (SSGESAAPSEPEAEALAA).

The protein belongs to the ATPase alpha/beta chains family. As to quaternary structure, F-type ATPases have 2 components, CF(1) - the catalytic core - and CF(0) - the membrane proton channel. CF(1) has five subunits: alpha(3), beta(3), gamma(1), delta(1), epsilon(1). CF(0) has three main subunits: a(1), b(2) and c(9-12). The alpha and beta chains form an alternating ring which encloses part of the gamma chain. CF(1) is attached to CF(0) by a central stalk formed by the gamma and epsilon chains, while a peripheral stalk is formed by the delta and b chains.

It localises to the cell membrane. The enzyme catalyses ATP + H2O + 4 H(+)(in) = ADP + phosphate + 5 H(+)(out). Functionally, produces ATP from ADP in the presence of a proton gradient across the membrane. The alpha chain is a regulatory subunit. This is ATP synthase subunit alpha from Saccharopolyspora erythraea (strain ATCC 11635 / DSM 40517 / JCM 4748 / NBRC 13426 / NCIMB 8594 / NRRL 2338).